Here is a 1430-residue protein sequence, read N- to C-terminus: 3'-5' RNA helicase YTHDC2 (1430 aa).

The segment at Met1–Lys37 is disordered. A compositionally biased stretch (gly residues) spans Pro14–Ala33. Positions Asp38–Asp106 constitute an R3H domain. A Helicase ATP-binding domain is found at Val203–Gln369. Residue Gly216–Thr223 coordinates ATP. The DEAH box signature appears at Asp316–His319. ANK repeat units follow at residues Thr506–Ser538 and Asn539–Leu571. A Helicase C-terminal domain is found at Leu612–Ala784. 3 positions are modified to phosphoserine: Ser1089, Ser1090, and Ser1092. Polar residues predominate over residues Glu1164–Gly1174. A disordered region spans residues Glu1164 to Val1288. Low complexity predominate over residues Ser1191 to Lys1200. Ser1202 carries the post-translational modification Phosphoserine. A compositionally biased stretch (basic and acidic residues) spans Lys1231 to Asp1249. A compositionally biased stretch (low complexity) spans Gln1250–Pro1264. Ser1263, Ser1267, and Ser1281 each carry phosphoserine. Residues Val1288–Trp1418 enclose the YTH domain. RNA contacts are provided by residues Lys1294 to Ser1296, Trp1310, and Trp1360.

The protein belongs to the DEAD box helicase family. DEAH subfamily. In terms of assembly, interacts with MEIOC; binds transcripts that regulate the mitotic cell cycle inhibiting progression into metaphase, thereby allowing meiotic prophase to proceed normally. Interacts (via ANK repeats) with XRN1. Interacts with ZCCHC4. Associates with the small ribosomal subunit. Interacts with RBM46. As to expression, expressed in testis. Not detected in spermatogonia next to the tubule wall but is strongly expressed in spermatocytes, suggesting that it is up-regulated in germ cells upon entry into meiosis.

The protein resides in the cytoplasm. It is found in the perinuclear region. It catalyses the reaction ATP + H2O = ADP + phosphate + H(+). Functionally, 3'-5' RNA helicase that plays a key role in the male and female germline by promoting transition from mitotic to meiotic divisions in stem cells. Specifically recognizes and binds N6-methyladenosine (m6A)-containing RNAs, a modification present at internal sites of mRNAs and some non-coding RNAs that plays a role in the efficiency of RNA processing and stability. Essential for ensuring a successful progression of the meiotic program in the germline by regulating the level of m6A-containing RNAs. Acts by binding and promoting degradation of m6A-containing mRNAs: the 3'-5' RNA helicase activity is required for this process and RNA degradation may be mediated by XRN1 exoribonuclease. Required for both spermatogenesis and oogenesis. The chain is 3'-5' RNA helicase YTHDC2 from Homo sapiens (Human).